The sequence spans 331 residues: Phosphate acyltransferase (331 aa).

It belongs to the PlsX family. In terms of assembly, homodimer. Probably interacts with PlsY.

The protein localises to the cytoplasm. The enzyme catalyses a fatty acyl-[ACP] + phosphate = an acyl phosphate + holo-[ACP]. Its pathway is lipid metabolism; phospholipid metabolism. Its function is as follows. Catalyzes the reversible formation of acyl-phosphate (acyl-PO(4)) from acyl-[acyl-carrier-protein] (acyl-ACP). This enzyme utilizes acyl-ACP as fatty acyl donor, but not acyl-CoA. This is Phosphate acyltransferase from Mesoplasma florum (strain ATCC 33453 / NBRC 100688 / NCTC 11704 / L1) (Acholeplasma florum).